A 370-amino-acid chain; its full sequence is Putative F-box/kelch-repeat protein At3g46050 (370 aa).

Residues 15 to 61 (PTSFSSLPDDIVLNCLARVSRFHYPTLSLVCKGFRSLLDSRELHATR) form the F-box domain. Kelch repeat units lie at residues 119–165 (KIYI…VIND) and 167–212 (IYVI…VPGS).

This is Putative F-box/kelch-repeat protein At3g46050 from Arabidopsis thaliana (Mouse-ear cress).